The chain runs to 111 residues: Complement inhibitor CirpT1 (111 aa).

Positions 1-19 (MATLIAARTKRKAPRVRIF) are cleaved as a signal peptide. 4 cysteine pairs are disulfide-bonded: Cys-40–Cys-64, Cys-59–Cys-98, Cys-76–Cys-99, and Cys-85–Cys-104.

It belongs to the CirpT family. As to expression, expressed in salivary glands.

The protein localises to the secreted. Functionally, complement inhibitor. Prevents complement-mediated activation of C5 by sterically preventing direct binding of C5 to its convertase (binding with domains MG4 and MG5). Binds C5 at a different binding site than the other tick complement inhibitors OmCI and RaCI3, and the drug eculizumab. Inhibits the complement in human, rat and guinea pig, and also shows a reduced inhibition in rabbit and pig. The protein is Complement inhibitor CirpT1 of Rhipicephalus pulchellus (Yellow backed tick).